Consider the following 101-residue polypeptide: Large ribosomal subunit protein uL23 (101 aa).

It belongs to the universal ribosomal protein uL23 family. Part of the 50S ribosomal subunit. Contacts protein L29, and trigger factor when it is bound to the ribosome.

Functionally, one of the early assembly proteins it binds 23S rRNA. One of the proteins that surrounds the polypeptide exit tunnel on the outside of the ribosome. Forms the main docking site for trigger factor binding to the ribosome. This chain is Large ribosomal subunit protein uL23, found in Wigglesworthia glossinidia brevipalpis.